The following is a 969-amino-acid chain: Leucine--tRNA ligase (969 aa).

Positions 1 to 23 (MTESPTTSPATGSGAAAPDSDAP) are disordered. Positions 78–89 (PYPSGEGLHVGH) match the 'HIGH' region motif. The short motif at 737–741 (KIGKS) is the 'KMSKS' region element. K740 is an ATP binding site.

The protein belongs to the class-I aminoacyl-tRNA synthetase family.

It is found in the cytoplasm. The catalysed reaction is tRNA(Leu) + L-leucine + ATP = L-leucyl-tRNA(Leu) + AMP + diphosphate. The polypeptide is Leucine--tRNA ligase (Mycobacterium avium (strain 104)).